Consider the following 53-residue polypeptide: Conotoxin Cal9.2f (53 aa).

A propeptide spanning residues 1–6 (KKGVTL) is cleaved from the precursor. Disulfide bonds link C15-C32, C20-C42, and C22-C47.

In terms of tissue distribution, expressed by the venom duct.

It is found in the secreted. Functionally, probable neurotoxin with unknown target. Possibly targets ion channels. The protein is Conotoxin Cal9.2f of Californiconus californicus (California cone).